The following is a 224-amino-acid chain: Voltage-dependent calcium channel gamma-1 subunit (224 aa).

The Cytoplasmic portion of the chain corresponds to M1–R10. The helical transmembrane segment at V11–T29 threads the bilayer. The Extracellular segment spans residues D30 to A110. 2 N-linked (GlcNAc...) asparagine glycosylation sites follow: N43 and N81. Residues C57 and C82 are joined by a disulfide bond. A helical membrane pass occupies residues A111–F131. The Cytoplasmic portion of the chain corresponds to R132–D136. Residues Y137–V157 form a helical membrane-spanning segment. Over E158–G181 the chain is Extracellular. A helical transmembrane segment spans residues W182–L206. The Cytoplasmic segment spans residues P207–H224.

This sequence belongs to the PMP-22/EMP/MP20 family. CACNG subfamily. As to quaternary structure, component of a calcium channel complex consisting of a pore-forming alpha subunit (CACNA1S) and the ancillary subunits CACNB1 or CACNB2, CACNG1 and CACNA2D1. The channel complex contains alpha, beta, gamma and delta subunits in a 1:1:1:1 ratio, i.e. it contains either CACNB1 or CACNB2. Post-translationally, N-glycosylated.

It localises to the cell membrane. Its subcellular location is the sarcolemma. In terms of biological role, regulatory subunit of the voltage-gated calcium channel that gives rise to L-type calcium currents in skeletal muscle. Regulates channel inactivation kinetics. The chain is Voltage-dependent calcium channel gamma-1 subunit (CACNG1) from Sus scrofa (Pig).